The primary structure comprises 308 residues: Ceramide synthase 1 LOH3 (308 aa).

6 helical membrane passes run valine 25–phenylalanine 45, cysteine 82–phenylalanine 102, leucine 128–glutamate 148, phenylalanine 154–cysteine 174, phenylalanine 213–leucine 233, and tyrosine 258–methionine 278. The 215-residue stretch at arginine 73 to glutamine 287 folds into the TLC domain. Serine 298 and serine 300 each carry phosphoserine.

In terms of tissue distribution, expressed ubiquitously at low levels. Not observed in pollen.

It is found in the endoplasmic reticulum membrane. The catalysed reaction is (4R)-hydroxysphinganine + a fatty acyl-CoA = an N-acyl-(4R)-4-hydroxysphinganine + CoA + H(+). The enzyme catalyses a sphingoid base + tetracosanoyl-CoA = an N-tetracosanoyl-sphingoid base + CoA + H(+). It catalyses the reaction (4R)-hydroxysphinganine + hexadecanoyl-CoA = N-hexadecanoyl-(4R)-hydroxysphinganine + CoA + H(+). It carries out the reaction (4R)-hydroxysphinganine + octadecanoyl-CoA = N-octadecanoyl-(4R)-hydroxysphinganine + CoA + H(+). The catalysed reaction is (4R)-hydroxysphinganine + eicosanoyl-CoA = N-eicosanoyl-(4R)-hydroxysphinganine + CoA + H(+). The enzyme catalyses docosanoyl-CoA + (4R)-hydroxysphinganine = N-docosanoyl-(4R)-hydroxysphinganine + CoA + H(+). It catalyses the reaction hexacosanoyl-CoA + (4R)-hydroxysphinganine = N-hexacosanoyl-(4R)-hydroxysphinganine + CoA + H(+). It carries out the reaction tetracosanoyl-CoA + (4R)-hydroxysphinganine = N-tetracosanoyl-(4R)-hydroxysphinganine + CoA + H(+). The catalysed reaction is tetracosanoyl-CoA + sphing-4-enine = N-tetracosanoyl-sphing-4-enine + CoA + H(+). The enzyme catalyses sphinga-(4E,8Z)-dienine + tetracosanoyl-CoA = N-tetracosanoylsphinga-(4E,8Z)-dienine + CoA + H(+). It catalyses the reaction sphinga-(4E,8E)-dienine + tetracosanoyl-CoA = N-tetracosanoylsphinga-(4E,8E)-dienine + CoA + H(+). It carries out the reaction (4R)-hydroxysphing-(8Z)-enine + tetracosanoyl-CoA = N-tetracosanoyl-(4R)-hydroxysphing-(8Z)-enine + CoA + H(+). The catalysed reaction is (4R)-hydroxysphing-(8E)-enine + tetracosanoyl-CoA = N-tetracosanoyl-(4R)-hydroxysphing-(8E)-enine + CoA + H(+). It participates in sphingolipid metabolism. Its activity is regulated as follows. Inhibited by the mycotoxin fumonisin B(1), a sphingosine analog mycotoxins produced by pathogenic fungi. Repressed by divalent cation such as magnesium Mg(2+), copper Cu(2+), zinc Zn(2+), manganese Mn(2+), calcium Ca(2+) and cobalt Co(2+). Functionally, essential for plant growth, promotes cell division in root meristems. Catalyzes the biosynthesis of ceramide sphingolipids with C(16) to C(28) fatty acids, structural membrane lipids involved in membrane trafficking (e.g. early endosomes) and cell polarity (e.g. polar auxin transport related proteins); active on a broad substrate spectrum, both regarding chain lengths of fatty acids and the sphingoid base, such as long-chain base (LCB) phytosphingosine (t18:0). Mediates resistance to sphinganine-analog mycotoxins (SAMs, e.g. fumonisin B(1)) by restoring the sphingolipid biosynthesis. Could salvage the transport of GPI-anchored proteins from the endoplasmic reticulum to the Golgi apparatus in ceramides-depleted cells after SAM exposure. Contributes to hypoxic conditions tolerance (e.g. submergences), especially in the dark, by promoting the formation of very-long-chain (VLC) ceramide species (22:1, 24:1 and 26:1) and of VLC unsaturated ceramides, which are modulating CTR1-mediated ethylene signaling leading to endoplasmic reticulum (ER)-to-nucleus translocation of EIN2 and EIN3. This chain is Ceramide synthase 1 LOH3, found in Arabidopsis thaliana (Mouse-ear cress).